Reading from the N-terminus, the 579-residue chain is Cyclin-T1-5 (579 aa).

2 disordered regions span residues 1-27 (MAGV…HEKQ) and 271-419 (RVPA…GDAL). Over residues 11 to 20 (YSESGVSSHS) the composition is skewed to polar residues. Residues 274-283 (ASQGSEVESS) show a composition bias toward low complexity. The span at 306–334 (SRQTSSVRSTHEQSNSDNHGGSSKGVLNQ) shows a compositional bias: polar residues. 2 stretches are compositionally biased toward basic and acidic residues: residues 349 to 380 (DNKE…EAPH) and 389 to 414 (PGKD…RNVD). Ser-423 carries the phosphoserine modification. 3 stretches are compositionally biased toward basic and acidic residues: residues 474–512 (DEKT…KNTE), 538–556 (KQSE…ESHK), and 563–579 (HHGD…NNHS). The interval 474–579 (DEKTKERKVQ…RRHSQENNHS (106 aa)) is disordered.

The protein belongs to the cyclin family. Cyclin T subfamily.

This is Cyclin-T1-5 (CYCT1-5) from Arabidopsis thaliana (Mouse-ear cress).